A 32-amino-acid chain; its full sequence is PRRRRASSGRPVRRRRRPKMSRRRRRGGRRRR.

A disordered region spans residues 1-32 (PRRRRASSGRPVRRRRRPKMSRRRRRGGRRRR).

Testis.

It localises to the nucleus. The protein resides in the chromosome. Its function is as follows. Protamines substitute for histones in the chromatin of sperm during the haploid phase of spermatogenesis. They compact sperm DNA into a highly condensed, stable and inactive complex. This is Protamine-1 from Esox lucius (Northern pike).